We begin with the raw amino-acid sequence, 62 residues long: Conotoxin Im5.1 (62 aa).

The signal sequence occupies residues 1-19; that stretch reads MYCLPVFIILLLLISSAPS. Positions 20 to 48 are excised as a propeptide; sequence TPPQPRNKDRVHLISLLDNHKQILQRDWN. Residue Trp60 is modified to Tryptophan amide.

Belongs to the conotoxin T superfamily. In terms of processing, contains 2 disulfide bonds that can be either 'C1-C3, C2-C4' or 'C1-C4, C2-C3', since these disulfide connectivities have been observed for conotoxins with cysteine framework V (for examples, see AC P0DQQ7 and AC P81755). As to expression, expressed by the venom duct.

Its subcellular location is the secreted. In Conus imperialis (Imperial cone), this protein is Conotoxin Im5.1.